The following is a 151-amino-acid chain: Extracellular globin-4 (151 aa).

The Globin domain maps to cysteine 6–proline 151. Cysteine 7 and cysteine 138 are disulfide-bonded. Heme b is bound at residue histidine 101.

This sequence belongs to the globin family. As to quaternary structure, the extracellular hemoglobin of the earthworm consists of 12 subunits that have a hexagonal bilayer structure with a molecular weight near 3.8 million. Each one-twelfth subunit is composed primarily of disulfide linked trimers (chains A, B, and C) and monomers (chain D).

The protein localises to the secreted. In Lumbricus terrestris (Common earthworm), this protein is Extracellular globin-4.